The primary structure comprises 567 residues: R-linalool synthase QH1, chloroplastic (567 aa).

Residues 1–24 constitute a chloroplast transit peptide; the sequence is GNAYMRIYSTKTTRITANATVNAA. 5 residues coordinate (2E)-geranyl diphosphate: Arg282, Asp319, Asp323, Arg460, and Asp463. Residues Asp319 and Asp323 each contribute to the Mg(2+) site. Residues 319–323 carry the DDXXD motif motif; sequence DDVYD. Mg(2+) is bound by residues Asp463, Thr467, and Glu471.

Belongs to the terpene synthase family. Tpsb subfamily. The cofactor is Mg(2+). Highly expressed in leaves and lower levels in inflorescences. Not detected in stems, stem epidermis, stem stele or roots.

The protein localises to the plastid. Its subcellular location is the chloroplast. It catalyses the reaction (2E)-geranyl diphosphate + H2O = (R)-linalool + diphosphate. The protein operates within secondary metabolite biosynthesis; terpenoid biosynthesis. In terms of biological role, monoterpene synthase that catalyzes the formation of (3R)-linalool from geranyl diphosphate, but not from isopentenyl diphosphate, dimethylallyl diphosphate, chrysanthemyl diphosphate, farnesyl diphosphate, (+)-copalyl diphosphate or geranylgeranyl diphosphate. In Artemisia annua (Sweet wormwood), this protein is R-linalool synthase QH1, chloroplastic (QH1).